Consider the following 205-residue polypeptide: Snake venom metalloproteinase BmooMPalpha-I (205 aa).

A Peptidase M12B domain is found at 8-204 (RYIELVVVAD…HNPQCILNEP (197 aa)). Ca(2+) is bound by residues glutamate 11 and aspartate 95. Cystine bridges form between cysteine 119/cysteine 199, cysteine 159/cysteine 183, and cysteine 161/cysteine 166. Histidine 144 lines the Zn(2+) pocket. The active site involves glutamate 145. Residues histidine 148 and histidine 154 each coordinate Zn(2+). Cysteine 199 and asparagine 202 together coordinate Ca(2+).

This sequence belongs to the venom metalloproteinase (M12B) family. P-I subfamily. Monomer. It depends on Zn(2+) as a cofactor. Expressed by the venom gland.

It localises to the secreted. Inhibited by EDTA. Not inhibited by the serine proteinase inhibitors aprotinin and benzamidine. In terms of biological role, snake venom zinc metalloproteinase that cleaves the alpha chain of fibrinogen (FGA) first followed by the beta chain (FGB) and shows no effect on the gamma chain. Cleaves only the beta chain of fibrin, leaving the gamma-dimer untouched. Shows proteolytic activity towards azocasein. Causes defibrinogenation when intraperitoneally administered on mice. This Bothrops moojeni (Lance-headed viper) protein is Snake venom metalloproteinase BmooMPalpha-I.